Consider the following 124-residue polypeptide: Non-specific lipid-transfer protein (124 aa).

The first 26 residues, Met-1 to Ala-26, serve as a signal peptide directing secretion. Cystine bridges form between Cys-30/Cys-77, Cys-40/Cys-54, Cys-55/Cys-100, and Cys-75/Cys-114.

The protein belongs to the plant LTP family.

Functionally, plant non-specific lipid-transfer proteins transfer phospholipids as well as galactolipids across membranes. May play a role in wax or cutin deposition in the cell walls of expanding epidermal cells and certain secretory tissues. The polypeptide is Non-specific lipid-transfer protein (Macadamia integrifolia (Macadamia nut)).